A 261-amino-acid polypeptide reads, in one-letter code: tRNA pseudouridine synthase A (261 aa).

Catalysis depends on Asp-51, which acts as the Nucleophile. Tyr-109 contributes to the substrate binding site.

This sequence belongs to the tRNA pseudouridine synthase TruA family. As to quaternary structure, homodimer.

It catalyses the reaction uridine(38/39/40) in tRNA = pseudouridine(38/39/40) in tRNA. In terms of biological role, formation of pseudouridine at positions 38, 39 and 40 in the anticodon stem and loop of transfer RNAs. The sequence is that of tRNA pseudouridine synthase A from Shewanella baltica (strain OS155 / ATCC BAA-1091).